The following is a 279-amino-acid chain: Protoheme IX farnesyltransferase (279 aa).

A run of 9 helical transmembrane segments spans residues 1–21, 29–49, 79–99, 101–121, 128–148, 156–176, 200–220, 225–245, and 254–274; these read MIKP…FFLA, IFFL…CILN, ILFF…YIYI, FLCT…YSYL, FSTF…YVAV, CTIL…SIII, IIFI…LYFF, FFYF…SFLS, and IWSR…SFLM.

Belongs to the UbiA prenyltransferase family. Protoheme IX farnesyltransferase subfamily.

It localises to the cell membrane. The enzyme catalyses heme b + (2E,6E)-farnesyl diphosphate + H2O = Fe(II)-heme o + diphosphate. It participates in porphyrin-containing compound metabolism; heme O biosynthesis; heme O from protoheme: step 1/1. Its function is as follows. Converts heme B (protoheme IX) to heme O by substitution of the vinyl group on carbon 2 of heme B porphyrin ring with a hydroxyethyl farnesyl side group. The sequence is that of Protoheme IX farnesyltransferase from Buchnera aphidicola subsp. Cinara cedri (strain Cc).